The primary structure comprises 1037 residues: MNGTRAAPGVTPSEVAMNGKNEMEVVEQAPIPKTNANIGLKSPVNTVEDVNQEDSTNSPPPIPHVEINQMPLSMIIRNLTVYTVKEISQYMKTTVHMNTADTSTARKMRFLNLLIFIRNQFLKLYVLIKWCRTIKENNFNIMIDLLNWFRGTNMTVNNCIWALKSTLESTTNAKLPNVDLVTALEVLTLGRPNLPTHDFKLSGENNEYETVNGQLRIPTKLIMQRLKDLNIIVMIKISSIDIPKQFNNYEIRDGRVYITVPGEFEIQLSTIDRHSPFFFVDFKLLFAGTDSLFNKPRLEKIINDVLLRNKKPLYSLYSLLHRYVLTLQLYMIHLELLNLENDGKFSGGNLVHSYNAKKSLIVMKYWRNGKLGNKTKIIIGVDRKSEDLVLKWDNENAKQSMHMPLVYTHVVGNVEAILDEIMFNHSRLIRADLLSRGVFQEDEEDPSVLLFQLPTTCLSTAPIQLKIDLVSGVFYFKNPSPLLLEYVSQINRAETPEDLTSVLQRLKLDKIVHIIRNMFDKTGWVCSKVIKLDNPIATSVNSEEIKTNLLQNDMFIRLASWPVNWYLILTIVSSNSSCIIEKRIGKIISTSGKWKVQYLDTTNVLSLKLESITYKKIISLQKSTLNRIINHTLIDSLNHLKTRNKVCSPDLIVNSLPKHLLEDEVDDKVPHSIENYHHISLITIELESFLEGSKALSGILESTMFLRMDYKKFEIRLYGKFKRSTMAFHCQCDDLLINFVEREPLAFYLAETFTNLNEIVQYLTLFRQKLMQLVVLTDVVERLHKNFASDHFKIISLKPNEVTFKYLKSSTDDKDCTINIITNEQTIKNLTVKLSDKNPQHIIQPFIDNQQFEYQFIFSYLQFTSPLFCCLKEILDESNKEERLENAKEESDSTRTSTSITLGLHNLSEYQLVYFNPELGYKITLILELKEVSINGKKKIQFYVHFSQDEHITTKSSAYPLIHQVRNEIFMLEMKKRDGTPSLIKLDNTRNVIRLGNGISCDSDSIVEVLMSINKILLGDSKSAPQITTVPPTNKTI.

The protein belongs to the Mediator complex subunit 14 family. Component of the Mediator complex.

Its subcellular location is the nucleus. Component of the Mediator complex, a coactivator involved in the regulated transcription of nearly all RNA polymerase II-dependent genes. Mediator functions as a bridge to convey information from gene-specific regulatory proteins to the basal RNA polymerase II transcription machinery. Mediator is recruited to promoters by direct interactions with regulatory proteins and serves as a scaffold for the assembly of a functional preinitiation complex with RNA polymerase II and the general transcription factors. In Candida glabrata (strain ATCC 2001 / BCRC 20586 / JCM 3761 / NBRC 0622 / NRRL Y-65 / CBS 138) (Yeast), this protein is Mediator of RNA polymerase II transcription subunit 14 (RGR1).